The following is a 263-amino-acid chain: Lens fiber major intrinsic protein (263 aa).

Over 1-9 the chain is Cytoplasmic; sequence MWELRSASF. Residues 10–29 traverse the membrane as a helical segment; sequence WRAIFAEFFATLFYVFFGLG. The Extracellular segment spans residues 30–41; that stretch reads ASLRWAPGPLHV. Residues 42–59 form a helical membrane-spanning segment; that stretch reads LQVALAFGLALATLVQAV. The Cytoplasmic segment spans residues 60 to 61; that stretch reads GH. Residues 62-77 constitute an intramembrane region (discontinuously helical); it reads ISGAHVNPAVTFAFLV. Positions 68 to 70 match the NPA 1 motif; sequence NPA. The Cytoplasmic portion of the chain corresponds to 78–82; the sequence is GSQMS. The chain crosses the membrane as a helical span at residues 83–106; sequence LLRAICYMAAQLLGAVAGAAVLYS. The Extracellular portion of the chain corresponds to 107–127; the sequence is VTPAAVRGNLALNTLHPGVSL. The helical transmembrane segment at 128–148 threads the bilayer; that stretch reads GQATTVEIFLTLQFVLCIFAT. Over 149–156 the chain is Cytoplasmic; the sequence is YDERRNGR. A helical transmembrane segment spans residues 157–175; sequence LGSVALAVGFSLTLGHLFG. Residues 176-178 lie on the Extracellular side of the membrane; that stretch reads MYY. Positions 179 to 193 form an intramembrane region, discontinuously helical; it reads TGAGMNPARSFAPAI. The NPA 2 signature appears at 184 to 186; the sequence is NPA. Residues 194–200 are Extracellular-facing; the sequence is LTRNFTN. A helical transmembrane segment spans residues 201-222; that stretch reads HWVYWVGPIIGGGLASLLYDFL. The Cytoplasmic portion of the chain corresponds to 223–263; the sequence is LFPRLKSVSERLSILKGARPSDSNGQPEGTGEPVELKTQAL. Residues 227–237 are interaction with CALM; that stretch reads LKSVSERLSIL. Phosphoserine is present on residues Ser235, Ser243, and Ser245. The interval 240–263 is disordered; sequence ARPSDSNGQPEGTGEPVELKTQAL. The residue at position 246 (Asn246) is a Deamidated asparagine.

Belongs to the MIP/aquaporin (TC 1.A.8) family. As to quaternary structure, homotetramer; each monomer provides an independent water pore. Two homotetramers on opposing membranes can dimerize, forming a cell-cell junction. Interacts with CALM; the calcium-calmodulin/CALM complex interacts with the cytoplasmic domains of two aquaporins, leading to channel closure. Interacts with BFSP1 (via C-terminus); prevents calcium-dependent inhibition of the water channel activity. Subject to partial proteolytic cleavage in the eye lens core. Partial proteolysis promotes interactions between tetramers from adjoining membranes. Post-translationally, fatty acylated at Met-1 and Lys-238. The acyl modifications, in decreasing order of ion abundance, are: oleoyl (C18:1) &gt; palmitoyl (C16:0) &gt; stearoyl (C18:0) &gt; eicosenoyl (C20:1) &gt; dihomo-gamma-linolenoyl (C20:3) &gt; palmitoleoyl (C16:1) &gt; eicosadienoyl (C20:2).

Its subcellular location is the cell membrane. The protein resides in the cell junction. The enzyme catalyses H2O(in) = H2O(out). The water channel activity is inhibited by calcium through calmodulin/CALM. Aquaporins form homotetrameric transmembrane channels, with each monomer independently mediating water transport across the plasma membrane along its osmotic gradient. Specifically expressed in lens fiber cells, this aquaporin is crucial for maintaining lens water homeostasis and transparency. Beyond water permeability, it also acts as a cell-to-cell adhesion molecule, forming thin junctions between lens fiber cells that are essential for maintaining the ordered structure and transparency of the lens. This Oryctolagus cuniculus (Rabbit) protein is Lens fiber major intrinsic protein.